Reading from the N-terminus, the 96-residue chain is Protein Vpr (96 aa).

A homooligomerization region spans residues 1 to 42; sequence MEQAPEDQGPQREPYNEWTLDLLEELKNEAVRHFPRPWLHSL. Ser79, Ser94, and Ser96 each carry phosphoserine; by host.

Belongs to the HIV-1 VPR protein family. As to quaternary structure, homooligomer, may form homodimer. Interacts with p6-gag region of the Pr55 Gag precursor protein through a (Leu-X-X)4 motif near the C-terminus of the P6gag protein. Interacts with host UNG. May interact with host RAD23A/HHR23A. Interacts with host VPRBP/DCAF1, leading to hijack the CUL4A-RBX1-DDB1-DCAF1/VPRBP complex, mediating ubiquitination of host proteins such as TERT and ZGPAT and arrest of the cell cycle in G2 phase. Post-translationally, phosphorylated on several residues by host. These phosphorylations regulate VPR activity for the nuclear import of the HIV-1 pre-integration complex.

The protein resides in the virion. The protein localises to the host nucleus. Its subcellular location is the host extracellular space. During virus replication, may deplete host UNG protein, and incude G2-M cell cycle arrest. Acts by targeting specific host proteins for degradation by the 26S proteasome, through association with the cellular CUL4A-DDB1 E3 ligase complex by direct interaction with host VPRPB/DCAF-1. Cell cycle arrest reportedly occurs within hours of infection and is not blocked by antiviral agents, suggesting that it is initiated by the VPR carried into the virion. Additionally, VPR induces apoptosis in a cell cycle dependent manner suggesting that these two effects are mechanistically linked. Detected in the serum and cerebrospinal fluid of AIDS patient, VPR may also induce cell death to bystander cells. Functionally, during virus entry, plays a role in the transport of the viral pre-integration (PIC) complex to the host nucleus. This function is crucial for viral infection of non-dividing macrophages. May act directly at the nuclear pore complex, by binding nucleoporins phenylalanine-glycine (FG)-repeat regions. This Human immunodeficiency virus type 1 group M subtype F1 (isolate 93BR020) (HIV-1) protein is Protein Vpr.